The sequence spans 523 residues: FAD:protein FMN transferase (523 aa).

3 helical membrane-spanning segments follow: residues 88–108 (LLAG…VALA), 118–138 (GGAA…LVLL), and 169–189 (GLAL…TAPA). FAD-binding positions include 277-279 (LFD) and D336. Position 339 (A339) interacts with Mg(2+). FAD-binding positions include K342 and 423-425 (HII). Mg(2+) is bound by residues D450 and T454.

This sequence in the N-terminal section; belongs to the RseC family. In the C-terminal section; belongs to the ApbE family. It depends on Mg(2+) as a cofactor.

Its subcellular location is the cell membrane. It catalyses the reaction L-threonyl-[protein] + FAD = FMN-L-threonyl-[protein] + AMP + H(+). Flavin transferase that catalyzes the transfer of the FMN moiety of FAD and its covalent binding to the hydroxyl group of a threonine residue in a target flavoprotein. Is likely involved in the modification of RnfG and RnfD. Required for nitrogen fixation. The sequence is that of FAD:protein FMN transferase from Rhodobacter capsulatus (Rhodopseudomonas capsulata).